The sequence spans 417 residues: Gamma-glutamyl phosphate reductase (417 aa).

The protein belongs to the gamma-glutamyl phosphate reductase family.

Its subcellular location is the cytoplasm. The catalysed reaction is L-glutamate 5-semialdehyde + phosphate + NADP(+) = L-glutamyl 5-phosphate + NADPH + H(+). The protein operates within amino-acid biosynthesis; L-proline biosynthesis; L-glutamate 5-semialdehyde from L-glutamate: step 2/2. Its function is as follows. Catalyzes the NADPH-dependent reduction of L-glutamate 5-phosphate into L-glutamate 5-semialdehyde and phosphate. The product spontaneously undergoes cyclization to form 1-pyrroline-5-carboxylate. The polypeptide is Gamma-glutamyl phosphate reductase (Hydrogenovibrio crunogenus (strain DSM 25203 / XCL-2) (Thiomicrospira crunogena)).